A 985-amino-acid polypeptide reads, in one-letter code: Bifunctional glutamine synthetase adenylyltransferase/adenylyl-removing enzyme (985 aa).

The interval Met1–Asp460 is adenylyl removase. The interval Gly476–Ser985 is adenylyl transferase.

The protein belongs to the GlnE family. Requires Mg(2+) as cofactor.

It catalyses the reaction [glutamine synthetase]-O(4)-(5'-adenylyl)-L-tyrosine + phosphate = [glutamine synthetase]-L-tyrosine + ADP. The enzyme catalyses [glutamine synthetase]-L-tyrosine + ATP = [glutamine synthetase]-O(4)-(5'-adenylyl)-L-tyrosine + diphosphate. Its function is as follows. Involved in the regulation of glutamine synthetase GlnA, a key enzyme in the process to assimilate ammonia. When cellular nitrogen levels are high, the C-terminal adenylyl transferase (AT) inactivates GlnA by covalent transfer of an adenylyl group from ATP to specific tyrosine residue of GlnA, thus reducing its activity. Conversely, when nitrogen levels are low, the N-terminal adenylyl removase (AR) activates GlnA by removing the adenylyl group by phosphorolysis, increasing its activity. The regulatory region of GlnE binds the signal transduction protein PII (GlnB) which indicates the nitrogen status of the cell. This is Bifunctional glutamine synthetase adenylyltransferase/adenylyl-removing enzyme from Pseudomonas syringae pv. tomato (strain ATCC BAA-871 / DC3000).